The chain runs to 478 residues: 2-succinylbenzoate--CoA ligase (478 aa).

The protein belongs to the ATP-dependent AMP-binding enzyme family. MenE subfamily.

The catalysed reaction is 2-succinylbenzoate + ATP + CoA = 2-succinylbenzoyl-CoA + AMP + diphosphate. Its pathway is quinol/quinone metabolism; 1,4-dihydroxy-2-naphthoate biosynthesis; 1,4-dihydroxy-2-naphthoate from chorismate: step 5/7. It participates in quinol/quinone metabolism; menaquinone biosynthesis. Its function is as follows. Converts 2-succinylbenzoate (OSB) to 2-succinylbenzoyl-CoA (OSB-CoA). This is 2-succinylbenzoate--CoA ligase from Bacillus licheniformis (strain ATCC 14580 / DSM 13 / JCM 2505 / CCUG 7422 / NBRC 12200 / NCIMB 9375 / NCTC 10341 / NRRL NRS-1264 / Gibson 46).